The following is a 203-amino-acid chain: Pyridoxine/pyridoxamine 5'-phosphate oxidase (203 aa).

Residues 51–56 (RMVLLK), 66–67 (YT), Arg-72, Lys-73, and Gln-95 contribute to the FMN site. Lys-56 lines the substrate pocket. Residues Tyr-113, Arg-117, and Ser-121 each contribute to the substrate site. FMN contacts are provided by residues 130 to 131 (QS) and Trp-175. 181–183 (RLH) provides a ligand contact to substrate. Arg-185 serves as a coordination point for FMN.

Belongs to the pyridoxamine 5'-phosphate oxidase family. Homodimer. FMN serves as cofactor.

It catalyses the reaction pyridoxamine 5'-phosphate + O2 + H2O = pyridoxal 5'-phosphate + H2O2 + NH4(+). The enzyme catalyses pyridoxine 5'-phosphate + O2 = pyridoxal 5'-phosphate + H2O2. The protein operates within cofactor metabolism; pyridoxal 5'-phosphate salvage; pyridoxal 5'-phosphate from pyridoxamine 5'-phosphate: step 1/1. It participates in cofactor metabolism; pyridoxal 5'-phosphate salvage; pyridoxal 5'-phosphate from pyridoxine 5'-phosphate: step 1/1. Catalyzes the oxidation of either pyridoxine 5'-phosphate (PNP) or pyridoxamine 5'-phosphate (PMP) into pyridoxal 5'-phosphate (PLP). This Novosphingobium aromaticivorans (strain ATCC 700278 / DSM 12444 / CCUG 56034 / CIP 105152 / NBRC 16084 / F199) protein is Pyridoxine/pyridoxamine 5'-phosphate oxidase.